Consider the following 474-residue polypeptide: A-type ATP synthase subunit B (474 aa).

The protein belongs to the ATPase alpha/beta chains family. As to quaternary structure, has multiple subunits with at least A(3), B(3), C, D, E, F, H, I and proteolipid K(x).

It is found in the cell membrane. Functionally, component of the A-type ATP synthase that produces ATP from ADP in the presence of a proton gradient across the membrane. The B chain is a regulatory subunit. This Halorubrum lacusprofundi (strain ATCC 49239 / DSM 5036 / JCM 8891 / ACAM 34) protein is A-type ATP synthase subunit B.